We begin with the raw amino-acid sequence, 237 residues long: MEQNDNGLFIKQERFEVLAILREICKQRTPLKVVNDRQQFQSLLLSVGPDNIVFSGDEADNRVDGECTIVIESHDAKIEFSVGQAEFTDHQGVNACSTRLPKELIYIQRRRQFRVTTPHWREFLCSGEYADGSEYQLRIHDLSAGGVGLRVDGPLPENLQPGFQFKKALLDLGSYGSFKVNMELVVINEDHELDDDDNMVHFSRLSCRFMKLGLAMERKIQSAVFAFELDFNKKKKR.

The 118-residue stretch at Gln108–Phe225 folds into the PilZ domain.

The protein belongs to the YcgR family. Monomer. Interacts with the flagellar basal bodies.

The protein resides in the bacterial flagellum basal body. Acts as a flagellar brake, regulating swimming and swarming in a bis-(3'-5') cyclic diguanylic acid (c-di-GMP)-dependent manner. Binds 1 c-di-GMP dimer per subunit. Increasing levels of c-di-GMP lead to decreased motility. The polypeptide is Flagellar brake protein YcgR (Serratia proteamaculans (strain 568)).